A 263-amino-acid polypeptide reads, in one-letter code: Small ribosomal subunit protein eS4 (263 aa).

The S4 RNA-binding domain maps to 42–104 (LPLIIFLRNR…TGENFRLIYD (63 aa)).

The protein belongs to the eukaryotic ribosomal protein eS4 family.

This is Small ribosomal subunit protein eS4 (RPS4) from Bos taurus (Bovine).